A 417-amino-acid polypeptide reads, in one-letter code: MDHATLAMILAIWFISFHFIKLLFSQQTTKLLPPGPKPLPIIGNILEVGKKPHRSFANLAKIHGPLISLRLGSVTTIVVSSADVAKEMFLKKDHPLSNRTIPNSVTAGDHHKLTMSWLPVSPKWRNFRKITAVHLLSPQRLDACQTFRHAKVQQLYEYVQECAQKGQAVDIGKAAFTTSLNLLSKLFFSVELAHHKSHTSQEFKELIWNIMEDIGKPNYADYFPILGCVDPSGIRRRLACSFDKLIAVFQSIICERLAPDSSTATTTTTDDVLDVLLQLFKQNELTMGEINHLLVDIFDAGTDTTSSTFEWVMAELIRNPEMMEKAQEEIKQVLGKDKQIQESDIINLPYLQAIIKETLRLHPPTVFLLPRKADTDVELYGYIVPKDAQIKYLLTYGLLEEILMHGKMLIFFRPKDL.

Residues 4–24 (ATLAMILAIWFISFHFIKLLF) traverse the membrane as a helical segment.

Belongs to the cytochrome P450 family.

It is found in the membrane. The protein operates within pigment biosynthesis; betalain biosynthesis. Inactive cytochrome unable to convert L-DOPA to cyclo-DOPA in the betalain pathway and producing a yellow mutant phenotype. A frameshift replaces 108 amino acids of the active protein found in red beets (AC I3PFJ5) with 27 new residues followed by a stop codon. The sequence is that of Inactive cytochrome P450 76AD1 from Beta vulgaris (Sugar beet).